A 61-amino-acid chain; its full sequence is Small ribosomal subunit protein eS30A (61 aa).

Residues 1-36 (MGKVHGSLARAGKVKSQTPKVEKQEKPKQPKGRAYK) are disordered.

It belongs to the eukaryotic ribosomal protein eS30 family. Component of the small ribosomal subunit (SSU). Mature yeast ribosomes consist of a small (40S) and a large (60S) subunit. The 40S small subunit contains 1 molecule of ribosomal RNA (18S rRNA) and at least 33 different proteins. The large 60S subunit contains 3 rRNA molecules (25S, 5.8S and 5S rRNA) and at least 46 different proteins.

Its subcellular location is the cytoplasm. It localises to the nucleus. In terms of biological role, component of the ribosome, a large ribonucleoprotein complex responsible for the synthesis of proteins in the cell. The small ribosomal subunit (SSU) binds messenger RNAs (mRNAs) and translates the encoded message by selecting cognate aminoacyl-transfer RNA (tRNA) molecules. The large subunit (LSU) contains the ribosomal catalytic site termed the peptidyl transferase center (PTC), which catalyzes the formation of peptide bonds, thereby polymerizing the amino acids delivered by tRNAs into a polypeptide chain. The nascent polypeptides leave the ribosome through a tunnel in the LSU and interact with protein factors that function in enzymatic processing, targeting, and the membrane insertion of nascent chains at the exit of the ribosomal tunnel. The protein is Small ribosomal subunit protein eS30A (rps3001) of Schizosaccharomyces pombe (strain 972 / ATCC 24843) (Fission yeast).